The primary structure comprises 31 residues: Cytochrome b6-f complex subunit 6 (31 aa).

Residues 4–24 (ITSYFGFLLAALTLTLALFIG) traverse the membrane as a helical segment.

This sequence belongs to the PetL family. As to quaternary structure, the 4 large subunits of the cytochrome b6-f complex are cytochrome b6, subunit IV (17 kDa polypeptide, PetD), cytochrome f and the Rieske protein, while the 4 small subunits are PetG, PetL, PetM and PetN. The complex functions as a dimer.

It is found in the plastid. Its subcellular location is the chloroplast thylakoid membrane. In terms of biological role, component of the cytochrome b6-f complex, which mediates electron transfer between photosystem II (PSII) and photosystem I (PSI), cyclic electron flow around PSI, and state transitions. PetL is important for photoautotrophic growth as well as for electron transfer efficiency and stability of the cytochrome b6-f complex. The chain is Cytochrome b6-f complex subunit 6 from Oryza sativa subsp. japonica (Rice).